A 363-amino-acid chain; its full sequence is Small ribosomal subunit biogenesis GTPase RsgA (363 aa).

Positions 112–268 (HQQVIAANID…LIDTPGMREL (157 aa)) constitute a CP-type G domain. GTP is bound by residues 157-160 (TKAD) and 210-218 (GSSGAGKST). Residues C291, C296, H298, and C304 each coordinate Zn(2+). Residues 340–363 (RVAQNNRGKGSGKRPASIDRPGRR) form a disordered region.

Belongs to the TRAFAC class YlqF/YawG GTPase family. RsgA subfamily. As to quaternary structure, monomer. Associates with 30S ribosomal subunit, binds 16S rRNA. Zn(2+) is required as a cofactor.

Its subcellular location is the cytoplasm. Functionally, one of several proteins that assist in the late maturation steps of the functional core of the 30S ribosomal subunit. Helps release RbfA from mature subunits. May play a role in the assembly of ribosomal proteins into the subunit. Circularly permuted GTPase that catalyzes slow GTP hydrolysis, GTPase activity is stimulated by the 30S ribosomal subunit. The sequence is that of Small ribosomal subunit biogenesis GTPase RsgA from Xanthomonas oryzae pv. oryzae (strain PXO99A).